We begin with the raw amino-acid sequence, 427 residues long: Gamma-glutamyl phosphate reductase (427 aa).

This sequence belongs to the gamma-glutamyl phosphate reductase family.

The protein resides in the cytoplasm. It catalyses the reaction L-glutamate 5-semialdehyde + phosphate + NADP(+) = L-glutamyl 5-phosphate + NADPH + H(+). It participates in amino-acid biosynthesis; L-proline biosynthesis; L-glutamate 5-semialdehyde from L-glutamate: step 2/2. In terms of biological role, catalyzes the NADPH-dependent reduction of L-glutamate 5-phosphate into L-glutamate 5-semialdehyde and phosphate. The product spontaneously undergoes cyclization to form 1-pyrroline-5-carboxylate. This is Gamma-glutamyl phosphate reductase from Streptomyces griseus subsp. griseus (strain JCM 4626 / CBS 651.72 / NBRC 13350 / KCC S-0626 / ISP 5235).